We begin with the raw amino-acid sequence, 889 residues long: Translation initiation factor IF-2 (889 aa).

2 disordered regions span residues 47 to 85 and 206 to 302; these read GHLKKQHGDESEAKPNKLTLNRKTKSTLTMGHGSKAKSV and AEAA…FTKP. 3 stretches are compositionally biased toward basic and acidic residues: residues 52–61, 214–241, and 252–263; these read QHGDESEAKP, AAKKLAEENEGRWKEQEAERKAKEKEVV, and AEDKSDSADESG. One can recognise a tr-type G domain in the interval 389 to 558; the sequence is TRAPVVTIMG…LLQSEVLELT (170 aa). The segment at 398–405 is G1; it reads GHVDHGKT. Residue 398 to 405 coordinates GTP; the sequence is GHVDHGKT. A G2 region spans residues 423–427; the sequence is GITQH. Residues 444-447 form a G3 region; that stretch reads DTPG. GTP contacts are provided by residues 444 to 448 and 498 to 501; these read DTPGH and NKMD. The interval 498–501 is G4; that stretch reads NKMD. Positions 534–536 are G5; it reads SAK.

Belongs to the TRAFAC class translation factor GTPase superfamily. Classic translation factor GTPase family. IF-2 subfamily.

Its subcellular location is the cytoplasm. One of the essential components for the initiation of protein synthesis. Protects formylmethionyl-tRNA from spontaneous hydrolysis and promotes its binding to the 30S ribosomal subunits. Also involved in the hydrolysis of GTP during the formation of the 70S ribosomal complex. This Colwellia psychrerythraea (strain 34H / ATCC BAA-681) (Vibrio psychroerythus) protein is Translation initiation factor IF-2.